We begin with the raw amino-acid sequence, 230 residues long: 5'-methylthioadenosine/S-adenosylhomocysteine nucleosidase (230 aa).

Catalysis depends on glutamate 12, which acts as the Proton acceptor. Substrate-binding positions include glycine 78, isoleucine 153, and 174 to 175; that span reads ME. Aspartate 198 (proton donor) is an active-site residue.

Belongs to the PNP/UDP phosphorylase family. MtnN subfamily.

It carries out the reaction S-adenosyl-L-homocysteine + H2O = S-(5-deoxy-D-ribos-5-yl)-L-homocysteine + adenine. The enzyme catalyses S-methyl-5'-thioadenosine + H2O = 5-(methylsulfanyl)-D-ribose + adenine. The catalysed reaction is 5'-deoxyadenosine + H2O = 5-deoxy-D-ribose + adenine. Its pathway is amino-acid biosynthesis; L-methionine biosynthesis via salvage pathway; S-methyl-5-thio-alpha-D-ribose 1-phosphate from S-methyl-5'-thioadenosine (hydrolase route): step 1/2. Functionally, catalyzes the irreversible cleavage of the glycosidic bond in both 5'-methylthioadenosine (MTA) and S-adenosylhomocysteine (SAH/AdoHcy) to adenine and the corresponding thioribose, 5'-methylthioribose and S-ribosylhomocysteine, respectively. Also cleaves 5'-deoxyadenosine, a toxic by-product of radical S-adenosylmethionine (SAM) enzymes, into 5-deoxyribose and adenine. This is 5'-methylthioadenosine/S-adenosylhomocysteine nucleosidase from Shewanella halifaxensis (strain HAW-EB4).